A 346-amino-acid polypeptide reads, in one-letter code: MRFREGPLGDLKVPLTWTAAVALIVAAVIGVAFLLADRRETLQEQAYGVTRQTVDTVARPVSGAIAAPGRWTGLGLDYVRSYFFTAHENRRLKAELAEMRQWRDRALALQDQNDRFKSLLGLRTDPPIPMAAARVVSDSRGPFANTRLADAGSERGIVVGNPVLNERGLVGRVVGVSRGVSRVLLLTDIASRTPVMIDRTNARAILTGDGGPNPKLDYLRGVDPIQQGDRVVTSGDGGVVPRGLPVGAAVKGLDGRWRVVLFADQASIDYVRILLFKDFAQLADEKQLQARSLPPVTTEDPQTSILSNPVSRPVAPTPSPATATPSAAPAARPATTATPPQTGAPR.

The stretch at 89–118 (NRRLKAELAEMRQWRDRALALQDQNDRFKS) forms a coiled coil. Residues 292-346 (SLPPVTTEDPQTSILSNPVSRPVAPTPSPATATPSAAPAARPATTATPPQTGAPR) form a disordered region. The span at 299–308 (EDPQTSILSN) shows a compositional bias: polar residues. A compositionally biased stretch (low complexity) spans 309–340 (PVSRPVAPTPSPATATPSAAPAARPATTATPP).

Belongs to the MreC family. As to quaternary structure, interacts with penicillin-binding proteins (PBP2, PBP1a, PBP1b, PBP2a and PBP2b). Interacts with outer membrane proteins belonging to the TonB-dependent receptor family of transport proteins.

It localises to the periplasm. Involved in formation and maintenance of cell shape. Required for the spatial organization of components of the peptidoglycan-synthesizing holoenzyme in the periplasm and peptidoglycan synthetic activity. This chain is Cell shape-determining protein MreC, found in Caulobacter vibrioides (strain NA1000 / CB15N) (Caulobacter crescentus).